The chain runs to 131 residues: Small ribosomal subunit protein uS8 (131 aa).

Belongs to the universal ribosomal protein uS8 family. Part of the 30S ribosomal subunit. Contacts proteins S5 and S12.

In terms of biological role, one of the primary rRNA binding proteins, it binds directly to 16S rRNA central domain where it helps coordinate assembly of the platform of the 30S subunit. The chain is Small ribosomal subunit protein uS8 from Blochmanniella pennsylvanica (strain BPEN).